Reading from the N-terminus, the 295-residue chain is Regucalcin (295 aa).

Glu-18 is an a divalent metal cation binding site. Residues Arg-100, Asn-102, and Asp-120 each contribute to the substrate site. Residues Asn-150 and Asp-200 each coordinate a divalent metal cation. Asp-200 serves as the catalytic Proton donor/acceptor.

This sequence belongs to the SMP-30/CGR1 family. The cofactor is Zn(2+). It depends on Mn(2+) as a cofactor. Ca(2+) serves as cofactor. Requires Mg(2+) as cofactor.

It is found in the cytoplasm. It catalyses the reaction D-glucono-1,5-lactone + H2O = D-gluconate + H(+). Its pathway is cofactor biosynthesis; L-ascorbate biosynthesis via UDP-alpha-D-glucuronate pathway; L-ascorbate from UDP-alpha-D-glucuronate: step 3/4. Gluconolactonase with low activity towards other sugar lactones, including gulonolactone and galactonolactone. Catalyzes a key step in ascorbic acid (vitamin C) biosynthesis. Can also hydrolyze diisopropyl phosphorofluoridate and phenylacetate (in vitro). Calcium-binding protein. Modulates Ca(2+) signaling, and Ca(2+)-dependent cellular processes and enzyme activities. This is Regucalcin from Danio rerio (Zebrafish).